The chain runs to 303 residues: Acetaldehyde dehydrogenase (303 aa).

Ser-13 to Ile-16 contacts NAD(+). Cys-128 functions as the Acyl-thioester intermediate in the catalytic mechanism. NAD(+)-binding positions include Ser-159 to Asn-167 and Asn-278.

This sequence belongs to the acetaldehyde dehydrogenase family.

The catalysed reaction is acetaldehyde + NAD(+) + CoA = acetyl-CoA + NADH + H(+). This Chloroflexus aggregans (strain MD-66 / DSM 9485) protein is Acetaldehyde dehydrogenase.